Reading from the N-terminus, the 127-residue chain is Small ribosomal subunit protein uS11 (127 aa).

Belongs to the universal ribosomal protein uS11 family. As to quaternary structure, part of the 30S ribosomal subunit. Interacts with proteins S7 and S18. Binds to IF-3.

In terms of biological role, located on the platform of the 30S subunit, it bridges several disparate RNA helices of the 16S rRNA. Forms part of the Shine-Dalgarno cleft in the 70S ribosome. The polypeptide is Small ribosomal subunit protein uS11 (Streptococcus pyogenes serotype M49 (strain NZ131)).